A 51-amino-acid chain; its full sequence is Ribosome biogenesis protein Nop10 (51 aa).

The protein belongs to the NOP10 family.

Its function is as follows. Involved in ribosome biogenesis; more specifically in 18S rRNA pseudouridylation and in cleavage of pre-rRNA. The chain is Ribosome biogenesis protein Nop10 from Methanosarcina barkeri (strain Fusaro / DSM 804).